Reading from the N-terminus, the 192-residue chain is Large ribosomal subunit protein bL25 (192 aa).

The protein belongs to the bacterial ribosomal protein bL25 family. CTC subfamily. Part of the 50S ribosomal subunit; part of the 5S rRNA/L5/L18/L25 subcomplex. Contacts the 5S rRNA. Binds to the 5S rRNA independently of L5 and L18.

In terms of biological role, this is one of the proteins that binds to the 5S RNA in the ribosome where it forms part of the central protuberance. The chain is Large ribosomal subunit protein bL25 from Solidesulfovibrio magneticus (strain ATCC 700980 / DSM 13731 / RS-1) (Desulfovibrio magneticus).